A 125-amino-acid chain; its full sequence is Small ribosomal subunit protein uS13 (125 aa).

The tract at residues 93 to 125 (RSLPVRGQRTRTNARTRKGKRKTVAGKKKAGKK) is disordered.

This sequence belongs to the universal ribosomal protein uS13 family. Part of the 30S ribosomal subunit. Forms a loose heterodimer with protein S19. Forms two bridges to the 50S subunit in the 70S ribosome.

In terms of biological role, located at the top of the head of the 30S subunit, it contacts several helices of the 16S rRNA. In the 70S ribosome it contacts the 23S rRNA (bridge B1a) and protein L5 of the 50S subunit (bridge B1b), connecting the 2 subunits; these bridges are implicated in subunit movement. Contacts the tRNAs in the A and P-sites. In Chlorobaculum tepidum (strain ATCC 49652 / DSM 12025 / NBRC 103806 / TLS) (Chlorobium tepidum), this protein is Small ribosomal subunit protein uS13.